Here is a 247-residue protein sequence, read N- to C-terminus: Cell division protein ZapD (247 aa).

The protein belongs to the ZapD family. As to quaternary structure, interacts with FtsZ.

The protein resides in the cytoplasm. Functionally, cell division factor that enhances FtsZ-ring assembly. Directly interacts with FtsZ and promotes bundling of FtsZ protofilaments, with a reduction in FtsZ GTPase activity. The protein is Cell division protein ZapD of Shigella flexneri.